The chain runs to 213 residues: Orotate phosphoribosyltransferase (213 aa).

Lysine 26 is a binding site for 5-phospho-alpha-D-ribose 1-diphosphate. 34–35 (FF) lines the orotate pocket. 5-phospho-alpha-D-ribose 1-diphosphate contacts are provided by residues 72–73 (YK), arginine 99, lysine 100, lysine 103, histidine 105, and 124–132 (DDVITAGTA). Residues threonine 128 and arginine 156 each coordinate orotate.

The protein belongs to the purine/pyrimidine phosphoribosyltransferase family. PyrE subfamily. Homodimer. It depends on Mg(2+) as a cofactor.

It carries out the reaction orotidine 5'-phosphate + diphosphate = orotate + 5-phospho-alpha-D-ribose 1-diphosphate. It participates in pyrimidine metabolism; UMP biosynthesis via de novo pathway; UMP from orotate: step 1/2. Functionally, catalyzes the transfer of a ribosyl phosphate group from 5-phosphoribose 1-diphosphate to orotate, leading to the formation of orotidine monophosphate (OMP). The sequence is that of Orotate phosphoribosyltransferase from Pseudomonas syringae pv. tomato (strain ATCC BAA-871 / DC3000).